Consider the following 954-residue polypeptide: Xylanolytic transcriptional activator xlnR (954 aa).

Disordered regions lie at residues 1–39 and 51–93; these read MSTTSLQHFPHSYSPFSSSRSLNRMAQSQTSGLDTLAEG and REAA…SQRD. Residues 8–21 show a composition bias toward low complexity; that stretch reads HFPHSYSPFSSSRS. Over residues 22 to 33 the composition is skewed to polar residues; sequence LNRMAQSQTSGL. A compositionally biased stretch (basic and acidic residues) spans 64 to 78; sequence GKPKDQFQVDNDNHH. Over residues 82 to 91 the composition is skewed to polar residues; that stretch reads SLSNFKNPSQ. Positions 119–145 form a DNA-binding region, zn(2)-C6 fungal-type; that stretch reads CDQCNQLRTKCDGQNPCAHCIDFGLTC. Disordered stretches follow at residues 173 to 226, 310 to 333, 566 to 607, and 758 to 777; these read ATNS…HSEA, LMNPQEPNSTSISHFRLGSSTENP, ELPP…PGNT, and MDGSHPNHVSPSGRSSSTVE. The segment covering 174–183 has biased composition (polar residues); that stretch reads TNSGQPNGSS. The segment covering 574 to 590 has biased composition (basic and acidic residues); it reads ARPDAERDGDPDADLSK. Over residues 764–777 the composition is skewed to polar residues; the sequence is NHVSPSGRSSSTVE.

It belongs to the xlnR/xlr1 family.

The protein resides in the nucleus. In terms of biological role, transcriptional activator of the xylanolytic system. Involved in the regulation of extracellular cellulolytic and xylanolytic genes and in the regulation of the intracellular activities of D-xylose catabolic genes in the pentose catabolic pathway (PCP) in response to the presence of D-xylose. The polypeptide is Xylanolytic transcriptional activator xlnR (xlnR) (Aspergillus fumigatus (strain ATCC MYA-4609 / CBS 101355 / FGSC A1100 / Af293) (Neosartorya fumigata)).